The chain runs to 77 residues: Dermatoxin-A1 (77 aa).

The first 22 residues, 1–22, serve as a signal peptide directing secretion; the sequence is MAFLKKSLFLVLFLGLVPLFLC. Positions 23–42 are excised as a propeptide; it reads ENEKREGENEKEENDDQSEE. Glutamine amide is present on Q76.

The protein belongs to the frog skin active peptide (FSAP) family. Dermatoxin subfamily. In terms of tissue distribution, expressed by the skin glands.

It is found in the secreted. Its function is as follows. Possesses a potent antimicrobial activity against Gram-positive and Gram-negative bacteria. Probably acts by disturbing membrane functions with its amphipathic structure. In Agalychnis annae (Blue-sided leaf frog), this protein is Dermatoxin-A1.